The primary structure comprises 397 residues: 2-deoxy-scyllo-inosose synthase (397 aa).

NAD(+) is bound by residues Asp-41, 71-74 (EPYK), 103-107 (GVIGN), 127-128 (TS), 138-140 (SLK), and 149-150 (KN). Residue Lys-140 is part of the active site. Glu-182 provides a ligand contact to Co(2+). Glu-242 is an active-site residue. His-245 and His-261 together coordinate Co(2+).

The protein belongs to the sugar phosphate cyclases superfamily. DOI synthase family. NAD(+) is required as a cofactor. The cofactor is Co(2+).

It catalyses the reaction D-glucose 6-phosphate = 2-deoxy-L-scyllo-inosose + phosphate. It participates in metabolic intermediate biosynthesis; 2-deoxystreptamine biosynthesis; 2-deoxystreptamine from D-glucose 6-phosphate: step 1/4. Its pathway is antibiotic biosynthesis; gentamicin biosynthesis. Catalyzes the intramolecular carbocycle formation from D-glucose-6-phosphate to 2-deoxy-scyllo-inosose (DOI). This chain is 2-deoxy-scyllo-inosose synthase (gtmA), found in Micromonospora echinospora (Micromonospora purpurea).